We begin with the raw amino-acid sequence, 289 residues long: Early E4 34 kDa protein (289 aa).

This sequence belongs to the adenoviridae E4 30 to 34 kDa protein family. As to quaternary structure, interacts with E1B-55k.

It is found in the host nucleus. The protein resides in the host cytoplasm. In terms of biological role, plays a major role to prevent cellular inhibition of viral genome replication by nuclear bodies. Assembles an SCF-like E3 ubiquitin ligase complex based on the cellular proteins ELOB, ELOC, CUL5 and RBX1, in cooperation with viral E1B-55K. This viral RING-type ligase ubiquitinates cellular substrates prior to proteasomal degradation: p53/TP53, LIG4, MRE11-RAD50-NBS1 (MRN) complex, ITGA3, DAXX and BLM. The chain is Early E4 34 kDa protein from Human adenovirus F serotype 40 (HAdV-40).